A 943-amino-acid chain; its full sequence is Isoleucine--tRNA ligase (943 aa).

The 'HIGH' region signature appears at 58 to 68 (PYANGTIHIGH). Residue E567 participates in L-isoleucyl-5'-AMP binding. The short motif at 608–612 (KMSKS) is the 'KMSKS' region element. Position 611 (K611) interacts with ATP. Positions 906, 909, 926, and 929 each coordinate Zn(2+).

Belongs to the class-I aminoacyl-tRNA synthetase family. IleS type 1 subfamily. In terms of assembly, monomer. Requires Zn(2+) as cofactor.

Its subcellular location is the cytoplasm. The enzyme catalyses tRNA(Ile) + L-isoleucine + ATP = L-isoleucyl-tRNA(Ile) + AMP + diphosphate. Functionally, catalyzes the attachment of isoleucine to tRNA(Ile). As IleRS can inadvertently accommodate and process structurally similar amino acids such as valine, to avoid such errors it has two additional distinct tRNA(Ile)-dependent editing activities. One activity is designated as 'pretransfer' editing and involves the hydrolysis of activated Val-AMP. The other activity is designated 'posttransfer' editing and involves deacylation of mischarged Val-tRNA(Ile). This Pseudomonas fluorescens (strain SBW25) protein is Isoleucine--tRNA ligase.